A 339-amino-acid polypeptide reads, in one-letter code: Glycerol-3-phosphate dehydrogenase [NAD(P)+] (339 aa).

NADPH contacts are provided by serine 15, tryptophan 16, histidine 36, and lysine 110. Lysine 110, glycine 144, and serine 146 together coordinate sn-glycerol 3-phosphate. Position 148 (alanine 148) interacts with NADPH. Sn-glycerol 3-phosphate-binding residues include lysine 199, aspartate 252, serine 262, arginine 263, and asparagine 264. Lysine 199 serves as the catalytic Proton acceptor. Arginine 263 is a binding site for NADPH. 2 residues coordinate NADPH: valine 287 and glutamate 289.

Belongs to the NAD-dependent glycerol-3-phosphate dehydrogenase family.

It localises to the cytoplasm. The enzyme catalyses sn-glycerol 3-phosphate + NAD(+) = dihydroxyacetone phosphate + NADH + H(+). It carries out the reaction sn-glycerol 3-phosphate + NADP(+) = dihydroxyacetone phosphate + NADPH + H(+). Its pathway is membrane lipid metabolism; glycerophospholipid metabolism. Functionally, catalyzes the reduction of the glycolytic intermediate dihydroxyacetone phosphate (DHAP) to sn-glycerol 3-phosphate (G3P), the key precursor for phospholipid synthesis. The protein is Glycerol-3-phosphate dehydrogenase [NAD(P)+] of Desulfotalea psychrophila (strain LSv54 / DSM 12343).